The primary structure comprises 127 residues: Fatty acid-binding protein, liver-type (127 aa).

It belongs to the calycin superfamily. Fatty-acid binding protein (FABP) family.

It is found in the cytoplasm. In Epinephelus coioides (Orange-spotted grouper), this protein is Fatty acid-binding protein, liver-type (fabp1).